The following is a 241-amino-acid chain: Methylthioribulose-1-phosphate dehydratase (241 aa).

Positions 1–11 (MSSLCDTSNGE) are enriched in polar residues. The segment at 1-20 (MSSLCDTSNGESHADPCQDK) is disordered. Cysteine 96 is a binding site for substrate. 2 residues coordinate Zn(2+): histidine 114 and histidine 116. Glutamate 138 acts as the Proton donor/acceptor in catalysis. Position 194 (histidine 194) interacts with Zn(2+).

It belongs to the aldolase class II family. MtnB subfamily. It depends on Zn(2+) as a cofactor.

Its subcellular location is the cytoplasm. It carries out the reaction 5-(methylsulfanyl)-D-ribulose 1-phosphate = 5-methylsulfanyl-2,3-dioxopentyl phosphate + H2O. Its pathway is amino-acid biosynthesis; L-methionine biosynthesis via salvage pathway; L-methionine from S-methyl-5-thio-alpha-D-ribose 1-phosphate: step 2/6. Catalyzes the dehydration of methylthioribulose-1-phosphate (MTRu-1-P) into 2,3-diketo-5-methylthiopentyl-1-phosphate (DK-MTP-1-P). Functions in the methionine salvage pathway. May play a role in apoptosis. This chain is Methylthioribulose-1-phosphate dehydratase, found in Osmerus mordax (Rainbow smelt).